The primary structure comprises 172 residues: Large ribosomal subunit protein uL10 (172 aa).

The protein belongs to the universal ribosomal protein uL10 family. As to quaternary structure, part of the ribosomal stalk of the 50S ribosomal subunit. The N-terminus interacts with L11 and the large rRNA to form the base of the stalk. The C-terminus forms an elongated spine to which L12 dimers bind in a sequential fashion forming a multimeric L10(L12)X complex.

Forms part of the ribosomal stalk, playing a central role in the interaction of the ribosome with GTP-bound translation factors. This chain is Large ribosomal subunit protein uL10, found in Methylobacterium radiotolerans (strain ATCC 27329 / DSM 1819 / JCM 2831 / NBRC 15690 / NCIMB 10815 / 0-1).